Here is a 206-residue protein sequence, read N- to C-terminus: Histidine biosynthesis bifunctional protein HisIE (206 aa).

The tract at residues 1–117 (MCNEPATSDV…SCFPAAPGQF (117 aa)) is phosphoribosyl-AMP cyclohydrolase. The segment at 118–206 (LGALDALVAE…AVTVLEARHR (89 aa)) is phosphoribosyl-ATP pyrophosphohydrolase.

This sequence in the N-terminal section; belongs to the PRA-CH family. In the C-terminal section; belongs to the PRA-PH family.

The protein resides in the cytoplasm. The enzyme catalyses 1-(5-phospho-beta-D-ribosyl)-ATP + H2O = 1-(5-phospho-beta-D-ribosyl)-5'-AMP + diphosphate + H(+). The catalysed reaction is 1-(5-phospho-beta-D-ribosyl)-5'-AMP + H2O = 1-(5-phospho-beta-D-ribosyl)-5-[(5-phospho-beta-D-ribosylamino)methylideneamino]imidazole-4-carboxamide. It participates in amino-acid biosynthesis; L-histidine biosynthesis; L-histidine from 5-phospho-alpha-D-ribose 1-diphosphate: step 2/9. Its pathway is amino-acid biosynthesis; L-histidine biosynthesis; L-histidine from 5-phospho-alpha-D-ribose 1-diphosphate: step 3/9. The protein is Histidine biosynthesis bifunctional protein HisIE (hisI) of Xylella fastidiosa (strain 9a5c).